The sequence spans 448 residues: DNA repair protein RadA (448 aa).

The segment at 10–27 (CQHCGFTSPKWLGKCVQC) adopts a C4-type zinc-finger fold. Residue 96–103 (GSPGVGKS) coordinates ATP. The RadA KNRFG motif motif lies at 253–257 (KNRFG). The segment at 351-448 (DVFINVSGGI…NVVGKIVEWM (98 aa)) is lon-protease-like.

This sequence belongs to the RecA family. RadA subfamily.

DNA-dependent ATPase involved in processing of recombination intermediates, plays a role in repairing DNA breaks. Stimulates the branch migration of RecA-mediated strand transfer reactions, allowing the 3' invading strand to extend heteroduplex DNA faster. Binds ssDNA in the presence of ADP but not other nucleotides, has ATPase activity that is stimulated by ssDNA and various branched DNA structures, but inhibited by SSB. Does not have RecA's homology-searching function. The protein is DNA repair protein RadA of Helicobacter pylori (strain J99 / ATCC 700824) (Campylobacter pylori J99).